Here is a 94-residue protein sequence, read N- to C-terminus: METKNAKAIARKVSIAPRKARLVVDLIRGKNIAQAQAILTFTPKVAAPVILKLLNSAVSNAVNNLKLNREQLYVKEVFVNEGFRLKRMFPRAKG.

This sequence belongs to the universal ribosomal protein uL22 family. As to quaternary structure, part of the 50S ribosomal subunit.

Its function is as follows. This protein binds specifically to 23S rRNA; its binding is stimulated by other ribosomal proteins, e.g. L4, L17, and L20. It is important during the early stages of 50S assembly. It makes multiple contacts with different domains of the 23S rRNA in the assembled 50S subunit and ribosome. The globular domain of the protein is located near the polypeptide exit tunnel on the outside of the subunit, while an extended beta-hairpin is found that lines the wall of the exit tunnel in the center of the 70S ribosome. In Tomato big bud phytoplasma, this protein is Large ribosomal subunit protein uL22 (rplV).